The sequence spans 413 residues: Protein esc1 (413 aa).

A compositionally biased stretch (polar residues) spans Met1–Met22. Disordered stretches follow at residues Met1–Ser202 and Met230–Gly265. The segment covering Ser23–Gln42 has biased composition (low complexity). Residues Gln43–Gln63 are compositionally biased toward polar residues. Low complexity-rich tracts occupy residues Ser86–Ala103 and Ser116–Pro126. Polar residues predominate over residues Thr127–Ala136. Low complexity predominate over residues Ser150 to Leu197. The bHLH domain maps to Glu334 to Leu385.

Efficient DNA binding requires dimerization with another bHLH protein.

It localises to the nucleus. In terms of biological role, involved in the sexual differentiation process. Modulate the ability of the cell to differentiate in response to the nitrogen starvation signal; in particular in response to decreases in the level of cellular cAMP. The sequence is that of Protein esc1 (esc1) from Schizosaccharomyces pombe (strain 972 / ATCC 24843) (Fission yeast).